A 566-amino-acid polypeptide reads, in one-letter code: ATP-dependent RNA helicase DBP3 (566 aa).

Positions 1–139 (MSAGKKHARD…TTPNGSAQRN (139 aa)) are disordered. The span at 39–58 (DKKKKDKKDKKERKEKKEKK) shows a compositional bias: basic residues. A compositionally biased stretch (basic and acidic residues) spans 81–91 (SEPKPEKEKKE). Residues 92-102 (KNNKKDKKDKK) show a composition bias toward basic residues. The span at 127–139 (AATTTPNGSAQRN) shows a compositional bias: polar residues. Residues 182-209 (IHFSHLPTSTLTSKKPFASFTAPTPIQA) carry the Q motif motif. The 185-residue stretch at 212–396 (WPFALSGRDV…EGFMIDPVKA (185 aa)) folds into the Helicase ATP-binding domain. Residue 225–232 (AETGSGKT) coordinates ATP. The short motif at 342 to 345 (DEAD) is the DEAD box element. One can recognise a Helicase C-terminal domain in the interval 433 to 566 (GKEQRLLELL…TEHDKSHSGS (134 aa)).

This sequence belongs to the DEAD box helicase family. DDX5/DBP2 subfamily.

Its subcellular location is the nucleus. The protein resides in the nucleolus. It catalyses the reaction ATP + H2O = ADP + phosphate + H(+). ATP-dependent RNA helicase required for 60S ribosomal subunit synthesis. Involved in efficient pre-rRNA processing, predominantly at site A3, which is necessary for the normal formation of 25S and 5.8S rRNAs. The sequence is that of ATP-dependent RNA helicase DBP3 (DBP3) from Chaetomium globosum (strain ATCC 6205 / CBS 148.51 / DSM 1962 / NBRC 6347 / NRRL 1970) (Soil fungus).